The chain runs to 334 residues: Ornithine carbamoyltransferase (334 aa).

Carbamoyl phosphate-binding positions include 57–60 (STRT), arginine 108, and 135–138 (HPTQ). L-ornithine is bound by residues asparagine 168, aspartate 232, and 236-237 (SM). Carbamoyl phosphate-binding positions include 274–275 (CL) and arginine 321.

The protein belongs to the aspartate/ornithine carbamoyltransferase superfamily. OTCase family.

Its subcellular location is the cytoplasm. It carries out the reaction carbamoyl phosphate + L-ornithine = L-citrulline + phosphate + H(+). It functions in the pathway amino-acid biosynthesis; L-arginine biosynthesis; L-arginine from L-ornithine and carbamoyl phosphate: step 1/3. Reversibly catalyzes the transfer of the carbamoyl group from carbamoyl phosphate (CP) to the N(epsilon) atom of ornithine (ORN) to produce L-citrulline. The polypeptide is Ornithine carbamoyltransferase (Cutibacterium acnes (strain DSM 16379 / KPA171202) (Propionibacterium acnes)).